Here is a 189-residue protein sequence, read N- to C-terminus: UPF0301 protein RC0043 (189 aa).

Belongs to the UPF0301 (AlgH) family.

This is UPF0301 protein RC0043 from Rickettsia conorii (strain ATCC VR-613 / Malish 7).